A 118-amino-acid chain; its full sequence is Large ribosomal subunit protein bL20 (118 aa).

This sequence belongs to the bacterial ribosomal protein bL20 family.

Its function is as follows. Binds directly to 23S ribosomal RNA and is necessary for the in vitro assembly process of the 50S ribosomal subunit. It is not involved in the protein synthesizing functions of that subunit. This chain is Large ribosomal subunit protein bL20, found in Methylibium petroleiphilum (strain ATCC BAA-1232 / LMG 22953 / PM1).